The sequence spans 680 residues: NADPH--cytochrome P450 reductase (680 aa).

Over 1-5 (MALDK) the chain is Lumenal. Residues 6 to 23 (LDLYVIIVLAVAVAAYFA) traverse the membrane as a helical segment. Residues 24-680 (KNQFLDQPQD…VQNRYQEDVW (657 aa)) are Cytoplasmic-facing. The Flavodoxin-like domain maps to 60-204 (TLLLFGSQTG…DFLTWKDNVF (145 aa)). FMN contacts are provided by residues 66–71 (SQTGTA), 117–120 (ATYG), 152–161 (LGNSTYEFYN), and D187. An FAD-binding FR-type domain is found at 264–509 (THPYLAKISK…SGPRNKFNKF (246 aa)). Residue R283 participates in NADP(+) binding. FAD is bound by residues 439–442 (RYYS), 457–459 (TAV), and 473–476 (GVVT). NADP(+) is bound by residues T537, 599–600 (SR), 606–610 (KVYVQ), and D642. W680 provides a ligand contact to FAD.

The protein belongs to the NADPH--cytochrome P450 reductase family. In the N-terminal section; belongs to the flavodoxin family. It in the C-terminal section; belongs to the flavoprotein pyridine nucleotide cytochrome reductase family. FAD serves as cofactor. The cofactor is FMN.

The protein resides in the endoplasmic reticulum membrane. Its subcellular location is the mitochondrion outer membrane. It is found in the cell membrane. The catalysed reaction is 2 oxidized [cytochrome P450] + NADPH = 2 reduced [cytochrome P450] + NADP(+) + H(+). Its function is as follows. This enzyme is required for electron transfer from NADP to cytochrome P450 in microsomes. It can also provide electron transfer to heme oxygenase and cytochrome B5. Involved in ergosterol biosynthesis. This Candida maltosa (Yeast) protein is NADPH--cytochrome P450 reductase.